Consider the following 442-residue polypeptide: Coiled-coil domain-containing protein 91 (442 aa).

The GGA1-binding motif stretch occupies residues 1 to 16; the sequence is MDDDDFGGFEAAETFD. A disordered region spans residues 1–27; sequence MDDDDFGGFEAAETFDGEQGGNQAVSP. Phosphoserine is present on residues Ser-43 and Ser-46. Disordered stretches follow at residues 48 to 80 and 114 to 134; these read ELILDHDHSSPSTGHLPPDAVISSADDTHADSS and HGALALEDEPEGPGVHVSNSQ. Coiled coils occupy residues 130–210, 253–318, and 346–408; these read VSNS…GHEA, HAQH…MKDV, and ARDQ…RRLD. Positions 211 to 414 are homodimerization; that stretch reads LSIIVDEYKA…RRLDQVTRQR (204 aa).

In terms of assembly, homodimer. Interacts with GGA1, GGA2 and AP1G1.

Its subcellular location is the membrane. It localises to the golgi apparatus. It is found in the trans-Golgi network membrane. The protein resides in the trans-Golgi network. In terms of biological role, involved in the regulation of membrane traffic through the trans-Golgi network (TGN). Functions in close cooperation with the GGAs in the sorting of hydrolases to lysosomes. The chain is Coiled-coil domain-containing protein 91 (Ccdc91) from Mus musculus (Mouse).